We begin with the raw amino-acid sequence, 149 residues long: MRVVIQRVSKASVTIEENVVGKVGPGFMLLVAFNDEDTDADLDFAVRKIVNMRIFEDEQAKMNLSINDVKGAILSVSQFTLFASTKKGNRPSFTKSGNPELASKLYDQFNAKLRATGIEVQTGQFGADMQVELVNDGPVTIVLDTQNKE.

Residues 137–138 (GP) carry the Gly-cisPro motif, important for rejection of L-amino acids motif.

It belongs to the DTD family. As to quaternary structure, homodimer.

The protein resides in the cytoplasm. The catalysed reaction is glycyl-tRNA(Ala) + H2O = tRNA(Ala) + glycine + H(+). It catalyses the reaction a D-aminoacyl-tRNA + H2O = a tRNA + a D-alpha-amino acid + H(+). Functionally, an aminoacyl-tRNA editing enzyme that deacylates mischarged D-aminoacyl-tRNAs. Also deacylates mischarged glycyl-tRNA(Ala), protecting cells against glycine mischarging by AlaRS. Acts via tRNA-based rather than protein-based catalysis; rejects L-amino acids rather than detecting D-amino acids in the active site. By recycling D-aminoacyl-tRNA to D-amino acids and free tRNA molecules, this enzyme counteracts the toxicity associated with the formation of D-aminoacyl-tRNA entities in vivo and helps enforce protein L-homochirality. The sequence is that of D-aminoacyl-tRNA deacylase from Pediococcus pentosaceus (strain ATCC 25745 / CCUG 21536 / LMG 10740 / 183-1w).